A 583-amino-acid polypeptide reads, in one-letter code: Glycine--tRNA ligase (583 aa).

2 residues coordinate substrate: Arg-100 and Glu-166. Residues 198 to 200 (RNE), 208 to 213 (VRLREF), 328 to 329 (EV), and 443 to 446 (GTDR) each bind ATP. 213-217 (FTIME) lines the substrate pocket. 439–443 (EPSFG) contributes to the substrate binding site.

It belongs to the class-II aminoacyl-tRNA synthetase family.

The protein resides in the cytoplasm. The catalysed reaction is tRNA(Gly) + glycine + ATP = glycyl-tRNA(Gly) + AMP + diphosphate. Catalyzes the attachment of glycine to tRNA(Gly). The polypeptide is Glycine--tRNA ligase (Aeropyrum pernix (strain ATCC 700893 / DSM 11879 / JCM 9820 / NBRC 100138 / K1)).